Reading from the N-terminus, the 400-residue chain is 3-phenylpropionate/cinnamic acid dioxygenase ferredoxin--NAD(+) reductase component (400 aa).

Residue 5-36 (TIIIVGGGQAAAMAAASLRQQGFTGELHLFSD) participates in FAD binding. 146–174 (SVVIVGAGTIGLELAASATQRGCKATVIE) is an NAD(+) binding site.

The protein belongs to the bacterial ring-hydroxylating dioxygenase ferredoxin reductase family. In terms of assembly, this dioxygenase system consists of four proteins: the two subunits of the hydroxylase component (HcaE and HcaF), a ferredoxin (HcaC) and a ferredoxin reductase (HcaD). It depends on FAD as a cofactor.

The catalysed reaction is 2 reduced [2Fe-2S]-[ferredoxin] + NAD(+) + H(+) = 2 oxidized [2Fe-2S]-[ferredoxin] + NADH. It functions in the pathway aromatic compound metabolism; 3-phenylpropanoate degradation. Functionally, part of the multicomponent 3-phenylpropionate dioxygenase, that converts 3-phenylpropionic acid (PP) and cinnamic acid (CI) into 3-phenylpropionate-dihydrodiol (PP-dihydrodiol) and cinnamic acid-dihydrodiol (CI-dihydrodiol), respectively. The protein is 3-phenylpropionate/cinnamic acid dioxygenase ferredoxin--NAD(+) reductase component of Escherichia coli O7:K1 (strain IAI39 / ExPEC).